The following is a 122-amino-acid chain: Atrial gland peptide B (122 aa).

The first 21 residues, 1–21 (MKANTMFIILCLTLSTLCVSS), serve as a signal peptide directing secretion. Positions 22-34 (QFTSVLGKIFVTN) are excised as a propeptide. At I69 the chain carries Isoleucine amide. Residues 73–122 (AAGGMEQSEGQNPETKSHSWRERSVLTPSLLSLGESLESGISKRISINQD) constitute a propeptide that is removed on maturation. The interval 74 to 95 (AGGMEQSEGQNPETKSHSWRER) is disordered.

It belongs to the molluscan ELH family.

The protein resides in the secreted. In terms of biological role, the atrial gland peptide A and peptide B precursors are the source of the 2 peptides that, upon release from this reproductive system gland, initiate the egg-laying process by exciting the bag cell neurons. These neurons, clustered in neural connectives near the abdominal ganglion, in turn release other peptides that act directly on the ganglion and also, via the circulating hemolymph, on many other organs to control the physiological processes of egg-laying. One of these other peptides is the egg-laying hormone. In Aplysia californica (California sea hare), this protein is Atrial gland peptide B.